Consider the following 631-residue polypeptide: ATP-dependent zinc metalloprotease FtsH (631 aa).

Topologically, residues 1–5 are cytoplasmic; that stretch reads MKKSN. A helical transmembrane segment spans residues 6–26; that stretch reads PWFVFFWITLLVIVLMFINFA. At 27-102 the chain is on the periplasmic side; it reads RQGGNEVELE…LEFSATEKSG (76 aa). A helical transmembrane segment spans residues 103–123; the sequence is WLGSLLLNWGPVVLLILFCFW. The Cytoplasmic portion of the chain corresponds to 124 to 631; it reads MMRGMSMGNK…KVINEKVIIS (508 aa). An ATP-binding site is contributed by 196–203; that stretch reads GSPGTGKT. H418 serves as a coordination point for Zn(2+). E419 is a catalytic residue. The Zn(2+) site is built by H422 and D494.

In the central section; belongs to the AAA ATPase family. The protein in the C-terminal section; belongs to the peptidase M41 family. As to quaternary structure, homohexamer. Zn(2+) serves as cofactor.

The protein localises to the cell inner membrane. Acts as a processive, ATP-dependent zinc metallopeptidase for both cytoplasmic and membrane proteins. Plays a role in the quality control of integral membrane proteins. This is ATP-dependent zinc metalloprotease FtsH from Endomicrobium trichonymphae.